The primary structure comprises 457 residues: Allantoinase (457 aa).

Residues His-58, His-60, Lys-145, His-181, His-237, and Asp-310 each contribute to the Zn(2+) site. Lys-145 carries the post-translational modification N6-carboxylysine.

The protein belongs to the metallo-dependent hydrolases superfamily. Allantoinase family. As to quaternary structure, homotetramer. Zn(2+) is required as a cofactor. Post-translationally, carboxylation allows a single lysine to coordinate two zinc ions.

It carries out the reaction (S)-allantoin + H2O = allantoate + H(+). It functions in the pathway nitrogen metabolism; (S)-allantoin degradation; allantoate from (S)-allantoin: step 1/1. Catalyzes the conversion of allantoin (5-ureidohydantoin) to allantoic acid by hydrolytic cleavage of the five-member hydantoin ring. The chain is Allantoinase from Solibacter usitatus (strain Ellin6076).